The primary structure comprises 255 residues: Type III pantothenate kinase (255 aa).

An ATP-binding site is contributed by 6-13; that stretch reads DVGNTNIV. Substrate is bound by residues tyrosine 100 and 107-110; that span reads GADR. The active-site Proton acceptor is the aspartate 109. Residue aspartate 129 coordinates K(+). Threonine 132 is a binding site for ATP. Threonine 184 contacts substrate.

This sequence belongs to the type III pantothenate kinase family. As to quaternary structure, homodimer. NH4(+) is required as a cofactor. It depends on K(+) as a cofactor.

It localises to the cytoplasm. It catalyses the reaction (R)-pantothenate + ATP = (R)-4'-phosphopantothenate + ADP + H(+). It functions in the pathway cofactor biosynthesis; coenzyme A biosynthesis; CoA from (R)-pantothenate: step 1/5. Functionally, catalyzes the phosphorylation of pantothenate (Pan), the first step in CoA biosynthesis. The chain is Type III pantothenate kinase from Caldanaerobacter subterraneus subsp. tengcongensis (strain DSM 15242 / JCM 11007 / NBRC 100824 / MB4) (Thermoanaerobacter tengcongensis).